Consider the following 224-residue polypeptide: Coiled-coil domain-containing protein 43 (224 aa).

Residue lysine 95 forms a Glycyl lysine isopeptide (Lys-Gly) (interchain with G-Cter in SUMO1) linkage. Coiled coils occupy residues serine 121–alanine 145 and arginine 177–glutamine 218. Positions valine 138 to aspartate 149 are enriched in acidic residues. Disordered regions lie at residues valine 138–asparagine 157 and alanine 176–arginine 224. At threonine 139 the chain carries Phosphothreonine. Basic and acidic residues predominate over residues alanine 176–glutamate 211. Residues lysine 212–arginine 224 are compositionally biased toward basic residues.

It belongs to the CCDC43 family.

This is Coiled-coil domain-containing protein 43 (CCDC43) from Homo sapiens (Human).